A 619-amino-acid polypeptide reads, in one-letter code: 1-deoxy-D-xylulose-5-phosphate synthase (619 aa).

Thiamine diphosphate is bound by residues His-80 and 121–123; that span reads GHS. Position 152 (Asp-152) interacts with Mg(2+). Residues 153–154, Asn-181, Tyr-288, and Glu-370 contribute to the thiamine diphosphate site; that span reads GA. Asn-181 contributes to the Mg(2+) binding site.

The protein belongs to the transketolase family. DXPS subfamily. Homodimer. The cofactor is Mg(2+). Requires thiamine diphosphate as cofactor.

It carries out the reaction D-glyceraldehyde 3-phosphate + pyruvate + H(+) = 1-deoxy-D-xylulose 5-phosphate + CO2. Its pathway is metabolic intermediate biosynthesis; 1-deoxy-D-xylulose 5-phosphate biosynthesis; 1-deoxy-D-xylulose 5-phosphate from D-glyceraldehyde 3-phosphate and pyruvate: step 1/1. Functionally, catalyzes the acyloin condensation reaction between C atoms 2 and 3 of pyruvate and glyceraldehyde 3-phosphate to yield 1-deoxy-D-xylulose-5-phosphate (DXP). This chain is 1-deoxy-D-xylulose-5-phosphate synthase, found in Yersinia pseudotuberculosis serotype O:3 (strain YPIII).